The primary structure comprises 1027 residues: Kinesin heavy chain isoform 5A (1027 aa).

Ala-2 is modified (N-acetylalanine). The Kinesin motor domain occupies 9–327 (SIKVLCRFRP…LMFGQRAKTI (319 aa)). ATP is bound at residue 86–93 (GQTSSGKT). The tract at residues 174-315 (VSSPEEILDV…PSSYNDAETK (142 aa)) is microtubule-binding. The necessary for interaction with ZFYVE27 stretch occupies residues 271–361 (EGTKSYVPYR…KTKAQKETIA (91 aa)). Residues 331–905 (ASVNLELTAE…EVDRIKEAVR (575 aa)) are a coiled coil. The interaction with BICD2 stretch occupies residues 353 to 1027 (TKAQKETIAK…FPLHQETAAS (675 aa)). The residue at position 397 (Thr-397) is a Phosphothreonine. Residues 906 to 936 (YKSSGKRGHSAQIAKPVRPGHYPASSPTNPY) form a disordered region. The segment at 907-1027 (KSSGKRGHSA…FPLHQETAAS (121 aa)) is globular.

The protein belongs to the TRAFAC class myosin-kinesin ATPase superfamily. Kinesin family. Kinesin subfamily. In terms of assembly, oligomer composed of two heavy chains and two light chains. Interacts with GRIP1. Interacts with FMR1 (via C-terminus); this interaction is increased in a mGluR-dependent manner. Interacts with BORCS5. Interacts with ZFYVE27. Interacts with VAPA, VAPB, SURF4, RAB11A (GDP-bound form), RAB11B (GDP-bound form) and RTN3 in a ZFYVE27-dependent manner. Interacts with BICD2. Interacts with DTNB. As to expression, expressed in brain.

The protein localises to the cytoplasm. The protein resides in the perinuclear region. Its subcellular location is the cytoskeleton. It is found in the perikaryon. It catalyses the reaction ATP + H2O + a kinesin associated with a microtubule at position (n) = ADP + phosphate a kinesin associated with a microtubule at position (n+1, toward the plus end).. Its function is as follows. Microtubule-dependent motor required for slow axonal transport of neurofilament proteins (NFH, NFM and NFL). Can induce formation of neurite-like membrane protrusions in non-neuronal cells in a ZFYVE27-dependent manner. The ZFYVE27-KIF5A complex contributes to the vesicular transport of VAPA, VAPB, SURF4, RAB11A, RAB11B and RTN3 proteins in neurons. Required for anterograde axonal transportation of MAPK8IP3/JIP3 which is essential for MAPK8IP3/JIP3 function in axon elongation. The sequence is that of Kinesin heavy chain isoform 5A from Rattus norvegicus (Rat).